Reading from the N-terminus, the 233-residue chain is Bcl-2-like protein 1 (233 aa).

Residues 4–24 (SNRELVVDFLSYKLSQKGYSW) carry the BH4 motif. A disordered region spans residues 29–71 (DVEENRTEAPEGTESEAETPSAINGNPSWHLADSPAVNGATGH). S49 bears the Phosphoserine; by PLK3 mark. A Phosphoserine; by CDK1 modification is found at S62. Positions 86 to 100 (VKQALREAGDEFELR) match the BH3 motif. The BH1 signature appears at 129–148 (ELFRDGVNWGRIVAFFSFGG). The short motif at 180–195 (PWIQENGGWDTFVELY) is the BH2 element. A helical transmembrane segment spans residues 210-226 (FNRWFLTGMTLAGVVLL).

The protein belongs to the Bcl-2 family. Homodimer. Heterodimers with BAX, BAK or BCL2. Heterodimerization with BAX does not seem to be required for anti-apoptotic activity. Interacts with BCL2L11. Interacts with BAD. Interacts with SIVA1 isoform 1; the interaction inhibits the anti-apoptotic activity. Interacts with BECN1 and PGAM5. Interacts with IKZF3. Interacts with HEBP2. Interacts with BOP. Interacts with p53/TP53 and BBC3; interaction with BBC3 disrupts the interaction with p53/TP53. Interacts with DNM1L and CLTA; DNM1L and BCL2L1 may form a complex in synaptic vesicles that also contains clathrin and MFF. Interacts with ATP5F1A and ATP5F1B; the interactions mediate the association of BCL2L1 with the mitochondrial membrane ATP synthase F(1)F(0) ATP synthase. Interacts with VDAC1. Interacts (via the loop between motifs BH4 and BH3) with NLRP1 (via LRR repeats), but not with NLRP2, NLRP3, NLRP4, PYCARD, nor MEFV. Interacts with BCL2L11 (via BH3). Interacts with RNF183. Interacts with GIMAP3/IAN4. Interacts with GIMAP5 and HSPA8/HSC70; the interaction between HSPA8 and BCL2L1 is impaired in the absence of GIMAP5. Interacts with CLU (isoform 4); this interaction releases and activates BAX and promotes cell death. Proteolytically cleaved by caspases during apoptosis. The cleaved protein, lacking the BH4 motif, has pro-apoptotic activity. In terms of processing, phosphorylated on Ser-62 by CDK1. This phosphorylation is partial in normal mitotic cells, but complete in G2-arrested cells upon DNA-damage, thus promoting subsequent apoptosis probably by triggering caspases-mediated proteolysis. Phosphorylated by PLK3, leading to regulate the G2 checkpoint and progression to cytokinesis during mitosis. Phosphorylation at Ser-49 appears during the S phase and G2, disappears rapidly in early mitosis during prometaphase, metaphase and early anaphase, and re-appears during telophase and cytokinesis. Post-translationally, ubiquitinated by RNF183 during prolonged ER stress, leading to degradation by the proteosome.

It is found in the mitochondrion membrane. Its subcellular location is the nucleus membrane. The protein resides in the mitochondrion matrix. The protein localises to the cytoplasm. It localises to the cytoskeleton. It is found in the microtubule organizing center. Its subcellular location is the centrosome. The protein resides in the cytosol. The protein localises to the cytoplasmic vesicle. It localises to the secretory vesicle. It is found in the synaptic vesicle membrane. Potent inhibitor of cell death. Inhibits activation of caspases. Appears to regulate cell death by blocking the voltage-dependent anion channel (VDAC) by binding to it and preventing the release of the caspase activator, CYC1, from the mitochondrial membrane. Also acts as a regulator of G2 checkpoint and progression to cytokinesis during mitosis. Regulates presynaptic plasticity, including neurotransmitter release and recovery, number of axonal mitochondria as well as size and number of synaptic vesicle clusters. During synaptic stimulation, increases ATP availability from mitochondria through regulation of mitochondrial membrane ATP synthase F(1)F(0) activity and regulates endocytic vesicle retrieval in hippocampal neurons through association with DMN1L and stimulation of its GTPase activity in synaptic vesicles. May attenuate inflammation impairing NLRP1-inflammasome activation, hence CASP1 activation and IL1B release. This is Bcl-2-like protein 1 (BCL2L1) from Sus scrofa (Pig).